The following is a 189-amino-acid chain: Cytochrome bo(3) ubiquinol oxidase subunit 3 (189 aa).

Residues 1 to 10 (MIKETMRNNK) are Cytoplasmic-facing. A helical transmembrane segment spans residues 11–31 (LFGLWIYLMSDCIIFAVLFAV). The Extracellular segment spans residues 32 to 52 (YAIISSNFSTNLINHKIFNLS). The chain crosses the membrane as a helical span at residues 53–73 (YVFLETLILLLSSLSSGMLTI). Residues 74 to 81 (QKNKNNIK) are Cytoplasmic-facing. The helical transmembrane segment at 82–102 (IIYFYLLLTFFLGLSFLLMEV) threads the bilayer. Residues 103 to 122 (NEFYKLILENCSPSQHAFFS) are Extracellular-facing. Residues 123–143 (IFFTIVGVHGIHVFFGLIFIL) traverse the membrane as a helical segment. Topologically, residues 144-161 (SILYQLFYLGITNTIRIR) are cytoplasmic. The chain crosses the membrane as a helical span at residues 162–182 (ILCFSLFWHFLDIIWICVFTF). The Extracellular segment spans residues 183-189 (VYLNGVI).

It belongs to the cytochrome c oxidase subunit 3 family. In terms of assembly, heterooctamer of two A chains, two B chains, two C chains and two D chains.

The protein resides in the cell membrane. Its function is as follows. Cytochrome bo(3) ubiquinol terminal oxidase is the component of the aerobic respiratory chain of E.coli that predominates when cells are grown at high aeration. Has proton pump activity across the membrane in addition to electron transfer, pumping 2 protons/electron. The polypeptide is Cytochrome bo(3) ubiquinol oxidase subunit 3 (cyoC) (Buchnera aphidicola subsp. Schizaphis graminum (strain Sg)).